The chain runs to 193 residues: 2',3'-cyclic-nucleotide 3'-phosphodiesterase (193 aa).

Histidine 40 (proton donor/acceptor) is an active-site residue. Position 42 (threonine 42) interacts with substrate. Histidine 129 functions as the Proton donor/acceptor in the catalytic mechanism. The substrate site is built by serine 131 and tyrosine 134.

Belongs to the 2H phosphoesterase superfamily. CPD1 family.

The protein resides in the golgi apparatus. The catalysed reaction is a nucleoside 2',3'-cyclic phosphate + H2O = a nucleoside 2'-phosphate + H(+). Its function is as follows. Involved in the metabolism of ADP-ribose 1',2'-cyclic phosphate which is produced as a consequence of tRNA splicing. The chain is 2',3'-cyclic-nucleotide 3'-phosphodiesterase (CPD1) from Phaeosphaeria nodorum (strain SN15 / ATCC MYA-4574 / FGSC 10173) (Glume blotch fungus).